Consider the following 536-residue polypeptide: CTP synthase (536 aa).

The interval 1 to 267 is amidoligase domain; the sequence is MSKFVFVTGG…CKETLKYLEL (267 aa). Residue Ser-13 participates in CTP binding. Ser-13 contributes to the UTP binding site. ATP is bound by residues 14 to 19 and Asp-71; that span reads SIGKGI. Mg(2+)-binding residues include Asp-71 and Glu-141. CTP contacts are provided by residues 148–150, 188–193, and Lys-224; these read DIE and KTKPTQ. Residues 188 to 193 and Lys-224 contribute to the UTP site; that span reads KTKPTQ. Residues 292–534 form the Glutamine amidotransferase type-1 domain; sequence KVALVGKYIE…IKSSQENLTQ (243 aa). Gly-354 is an L-glutamine binding site. Cys-381 (nucleophile; for glutamine hydrolysis) is an active-site residue. L-glutamine-binding positions include 382–385, Glu-405, and Arg-462; that span reads LGMQ. Catalysis depends on residues His-507 and Glu-509.

It belongs to the CTP synthase family. As to quaternary structure, homotetramer.

The enzyme catalyses UTP + L-glutamine + ATP + H2O = CTP + L-glutamate + ADP + phosphate + 2 H(+). The catalysed reaction is L-glutamine + H2O = L-glutamate + NH4(+). It catalyses the reaction UTP + NH4(+) + ATP = CTP + ADP + phosphate + 2 H(+). It functions in the pathway pyrimidine metabolism; CTP biosynthesis via de novo pathway; CTP from UDP: step 2/2. With respect to regulation, allosterically activated by GTP, when glutamine is the substrate; GTP has no effect on the reaction when ammonia is the substrate. The allosteric effector GTP functions by stabilizing the protein conformation that binds the tetrahedral intermediate(s) formed during glutamine hydrolysis. Inhibited by the product CTP, via allosteric rather than competitive inhibition. Functionally, catalyzes the ATP-dependent amination of UTP to CTP with either L-glutamine or ammonia as the source of nitrogen. Regulates intracellular CTP levels through interactions with the four ribonucleotide triphosphates. The sequence is that of CTP synthase from Prochlorococcus marinus (strain MIT 9312).